The chain runs to 422 residues: UDP-N-acetylglucosamine 1-carboxyvinyltransferase (422 aa).

22 to 23 contributes to the phosphoenolpyruvate binding site; that stretch reads KN. Arg-92 is a binding site for UDP-N-acetyl-alpha-D-glucosamine. The active-site Proton donor is the Cys-116. Cys-116 carries the 2-(S-cysteinyl)pyruvic acid O-phosphothioketal modification. Residues 121–125, Asp-307, and Leu-329 each bind UDP-N-acetyl-alpha-D-glucosamine; that span reads RPVDL.

The protein belongs to the EPSP synthase family. MurA subfamily.

The protein resides in the cytoplasm. The catalysed reaction is phosphoenolpyruvate + UDP-N-acetyl-alpha-D-glucosamine = UDP-N-acetyl-3-O-(1-carboxyvinyl)-alpha-D-glucosamine + phosphate. Its pathway is cell wall biogenesis; peptidoglycan biosynthesis. Its function is as follows. Cell wall formation. Adds enolpyruvyl to UDP-N-acetylglucosamine. This is UDP-N-acetylglucosamine 1-carboxyvinyltransferase from Aliarcobacter butzleri (strain RM4018) (Arcobacter butzleri).